We begin with the raw amino-acid sequence, 420 residues long: UDP-N-acetylglucosamine 1-carboxyvinyltransferase (420 aa).

Residue 22–23 (KN) participates in phosphoenolpyruvate binding. UDP-N-acetyl-alpha-D-glucosamine is bound at residue Arg93. Cys117 acts as the Proton donor in catalysis. Cys117 is modified (2-(S-cysteinyl)pyruvic acid O-phosphothioketal). Asp307 and Val329 together coordinate UDP-N-acetyl-alpha-D-glucosamine.

Belongs to the EPSP synthase family. MurA subfamily.

It localises to the cytoplasm. It catalyses the reaction phosphoenolpyruvate + UDP-N-acetyl-alpha-D-glucosamine = UDP-N-acetyl-3-O-(1-carboxyvinyl)-alpha-D-glucosamine + phosphate. The protein operates within cell wall biogenesis; peptidoglycan biosynthesis. Functionally, cell wall formation. Adds enolpyruvyl to UDP-N-acetylglucosamine. This chain is UDP-N-acetylglucosamine 1-carboxyvinyltransferase, found in Marinobacter nauticus (strain ATCC 700491 / DSM 11845 / VT8) (Marinobacter aquaeolei).